Consider the following 287-residue polypeptide: Mitochondrial glycine transporter A (287 aa).

3 Solcar repeats span residues 7 to 97, 104 to 188, and 198 to 282; these read HPAV…LKQR, PGPL…TKHL, and YAPV…LMAQ. Transmembrane regions (helical) follow at residues 13-38, 72-98, 110-135, 163-186, 202-228, and 257-275; these read FMCG…TRLQ, GVSP…KQRY, VLLG…TRFE, GLMA…SQTK, ANFS…KTHI, and GAVP…AWTV.

Belongs to the mitochondrial carrier (TC 2.A.29) family. SLC25A38 subfamily. In terms of tissue distribution, at 24 hours post-fertilization, expressed predominantly in posterior blood island, posterior cardinal vein and circulating blood, as well as in somites, brain and retina. At 34 hours post-fertilization, becomes restricted to posterior blood island and circulating blood.

The protein resides in the mitochondrion inner membrane. It carries out the reaction glycine(in) = glycine(out). Mitochondrial glycine transporter that imports glycine into the mitochondrial matrix. Plays an important role in providing glycine for the first enzymatic step in heme biosynthesis, the condensation of glycine with succinyl-CoA to produce 5-aminolevulinate (ALA) in the mitochondrial matrix. Required during erythropoiesis. Functionally, may play a role as pro-apoptotic protein that induces caspase-dependent apoptosis. In Danio rerio (Zebrafish), this protein is Mitochondrial glycine transporter A (slc25a38a).